The following is a 283-amino-acid chain: ATP phosphoribosyltransferase (283 aa).

It belongs to the ATP phosphoribosyltransferase family. Long subfamily. The cofactor is Mg(2+).

It is found in the cytoplasm. It catalyses the reaction 1-(5-phospho-beta-D-ribosyl)-ATP + diphosphate = 5-phospho-alpha-D-ribose 1-diphosphate + ATP. It participates in amino-acid biosynthesis; L-histidine biosynthesis; L-histidine from 5-phospho-alpha-D-ribose 1-diphosphate: step 1/9. Feedback inhibited by histidine. Catalyzes the condensation of ATP and 5-phosphoribose 1-diphosphate to form N'-(5'-phosphoribosyl)-ATP (PR-ATP). Has a crucial role in the pathway because the rate of histidine biosynthesis seems to be controlled primarily by regulation of HisG enzymatic activity. This Azobacteroides pseudotrichonymphae genomovar. CFP2 protein is ATP phosphoribosyltransferase.